Consider the following 90-residue polypeptide: DNA-binding protein HU-alpha (90 aa).

The protein belongs to the bacterial histone-like protein family. As to quaternary structure, heterodimer of an alpha and a beta chain.

Its function is as follows. Histone-like DNA-binding protein which is capable of wrapping DNA to stabilize it, and thus to prevent its denaturation under extreme environmental conditions. The sequence is that of DNA-binding protein HU-alpha (hupA) from Pseudomonas aeruginosa (strain ATCC 15692 / DSM 22644 / CIP 104116 / JCM 14847 / LMG 12228 / 1C / PRS 101 / PAO1).